The primary structure comprises 92 residues: Acylphosphatase (92 aa).

The Acylphosphatase-like domain occupies 5-92; the sequence is CIAAYVYGVV…TPFETFKIRY (88 aa). Catalysis depends on residues Arg-20 and Asn-38.

This sequence belongs to the acylphosphatase family.

The enzyme catalyses an acyl phosphate + H2O = a carboxylate + phosphate + H(+). The chain is Acylphosphatase (acyP) from Yersinia enterocolitica serotype O:8 / biotype 1B (strain NCTC 13174 / 8081).